A 463-amino-acid polypeptide reads, in one-letter code: Cysteine--tRNA ligase (463 aa).

Cys29 lines the Zn(2+) pocket. The short motif at 31-41 (MTIYDLCHIGH) is the 'HIGH' region element. Residues Cys218, His243, and Glu247 each contribute to the Zn(2+) site. The 'KMSKS' region signature appears at 275–279 (KMSKS). Lys278 provides a ligand contact to ATP.

This sequence belongs to the class-I aminoacyl-tRNA synthetase family. In terms of assembly, monomer. Zn(2+) serves as cofactor.

It is found in the cytoplasm. It catalyses the reaction tRNA(Cys) + L-cysteine + ATP = L-cysteinyl-tRNA(Cys) + AMP + diphosphate. The polypeptide is Cysteine--tRNA ligase (Polaromonas naphthalenivorans (strain CJ2)).